The sequence spans 814 residues: Protein ADP-ribosyltransferase PARP3 (814 aa).

Basic and acidic residues-rich tracts occupy residues methionine 1 to glycine 19 and glutamate 27 to arginine 48. A disordered region spans residues methionine 1 to glycine 52. A PADR1 zinc-binding domain is found at lysine 38–proline 186. Residues glycine 105–proline 150 form a zinc ribbon region. Cysteine 110, cysteine 113, cysteine 127, and cysteine 137 together coordinate Zn(2+). TPR repeat units lie at residues serine 182–lysine 215 and aspartate 277–arginine 310. Residues phenylalanine 187–valine 274 form the BRCT domain. The 101-residue stretch at glycine 322 to phenylalanine 422 folds into the WGR domain. The PARP alpha-helical domain occupies histidine 449–glycine 568. One can recognise a PARP catalytic domain in the interval aspartate 577–isoleucine 808.

Belongs to the ARTD/PARP family.

It localises to the nucleus. It catalyses the reaction L-aspartyl-[protein] + NAD(+) = 4-O-(ADP-D-ribosyl)-L-aspartyl-[protein] + nicotinamide. It carries out the reaction L-glutamyl-[protein] + NAD(+) = 5-O-(ADP-D-ribosyl)-L-glutamyl-[protein] + nicotinamide. Functionally, involved in the base excision repair (BER) pathway, by catalyzing the poly(ADP-ribosyl)ation of a limited number of acceptor proteins involved in chromatin architecture and in DNA metabolism. This modification follows DNA damages and appears as an obligatory step in a detection/signaling pathway leading to the reparation of DNA strand breaks. The protein is Protein ADP-ribosyltransferase PARP3 (PARP3) of Arabidopsis thaliana (Mouse-ear cress).